Consider the following 442-residue polypeptide: Probable glycine dehydrogenase (decarboxylating) subunit 1 (442 aa).

This sequence belongs to the GcvP family. N-terminal subunit subfamily. As to quaternary structure, the glycine cleavage system is composed of four proteins: P, T, L and H. In this organism, the P 'protein' is a heterodimer of two subunits.

The enzyme catalyses N(6)-[(R)-lipoyl]-L-lysyl-[glycine-cleavage complex H protein] + glycine + H(+) = N(6)-[(R)-S(8)-aminomethyldihydrolipoyl]-L-lysyl-[glycine-cleavage complex H protein] + CO2. In terms of biological role, the glycine cleavage system catalyzes the degradation of glycine. The P protein binds the alpha-amino group of glycine through its pyridoxal phosphate cofactor; CO(2) is released and the remaining methylamine moiety is then transferred to the lipoamide cofactor of the H protein. The polypeptide is Probable glycine dehydrogenase (decarboxylating) subunit 1 (Geotalea uraniireducens (strain Rf4) (Geobacter uraniireducens)).